A 127-amino-acid polypeptide reads, in one-letter code: Glycine cleavage system H protein (127 aa).

Residues 24-105 (TLTVGVTDHA…AYAAWLFKLK (82 aa)) form the Lipoyl-binding domain. Residue K65 is modified to N6-lipoyllysine.

The protein belongs to the GcvH family. In terms of assembly, the glycine cleavage system is composed of four proteins: P, T, L and H. It depends on (R)-lipoate as a cofactor.

In terms of biological role, the glycine cleavage system catalyzes the degradation of glycine. The H protein shuttles the methylamine group of glycine from the P protein to the T protein. The polypeptide is Glycine cleavage system H protein (Azoarcus sp. (strain BH72)).